A 104-amino-acid polypeptide reads, in one-letter code: ATP-dependent Clp protease adapter protein ClpS (104 aa).

It belongs to the ClpS family. Binds to the N-terminal domain of the chaperone ClpA.

Functionally, involved in the modulation of the specificity of the ClpAP-mediated ATP-dependent protein degradation. The sequence is that of ATP-dependent Clp protease adapter protein ClpS from Desulforapulum autotrophicum (strain ATCC 43914 / DSM 3382 / VKM B-1955 / HRM2) (Desulfobacterium autotrophicum).